We begin with the raw amino-acid sequence, 357 residues long: UDP-3-O-acylglucosamine N-acyltransferase (357 aa).

H251 (proton acceptor) is an active-site residue.

The protein belongs to the transferase hexapeptide repeat family. LpxD subfamily. In terms of assembly, homotrimer.

The catalysed reaction is a UDP-3-O-[(3R)-3-hydroxyacyl]-alpha-D-glucosamine + a (3R)-hydroxyacyl-[ACP] = a UDP-2-N,3-O-bis[(3R)-3-hydroxyacyl]-alpha-D-glucosamine + holo-[ACP] + H(+). The protein operates within bacterial outer membrane biogenesis; LPS lipid A biosynthesis. Functionally, catalyzes the N-acylation of UDP-3-O-acylglucosamine using 3-hydroxyacyl-ACP as the acyl donor. Is involved in the biosynthesis of lipid A, a phosphorylated glycolipid that anchors the lipopolysaccharide to the outer membrane of the cell. The protein is UDP-3-O-acylglucosamine N-acyltransferase of Ralstonia pickettii (strain 12J).